Reading from the N-terminus, the 253-residue chain is Phosphate import ATP-binding protein PstB 3 (253 aa).

The region spanning 8-248 (LVINNLDLYY…PQDERTENYI (241 aa)) is the ABC transporter domain. 40–47 (GPSGCGKS) is a binding site for ATP.

It belongs to the ABC transporter superfamily. Phosphate importer (TC 3.A.1.7) family. In terms of assembly, the complex is composed of two ATP-binding proteins (PstB), two transmembrane proteins (PstC and PstA) and a solute-binding protein (PstS).

It is found in the cell membrane. It carries out the reaction phosphate(out) + ATP + H2O = ADP + 2 phosphate(in) + H(+). In terms of biological role, part of the ABC transporter complex PstSACB involved in phosphate import. Responsible for energy coupling to the transport system. This chain is Phosphate import ATP-binding protein PstB 3, found in Streptococcus agalactiae serotype III (strain NEM316).